Reading from the N-terminus, the 175-residue chain is ATP synthase subunit b (175 aa).

A helical transmembrane segment spans residues 20 to 40 (LIFWTAITFVIVLLILKKIAW).

Belongs to the ATPase B chain family. In terms of assembly, F-type ATPases have 2 components, F(1) - the catalytic core - and F(0) - the membrane proton channel. F(1) has five subunits: alpha(3), beta(3), gamma(1), delta(1), epsilon(1). F(0) has four main subunits: a(1), b(2) and c(10-14). The alpha and beta chains form an alternating ring which encloses part of the gamma chain. F(1) is attached to F(0) by a central stalk formed by the gamma and epsilon chains, while a peripheral stalk is formed by the delta and b chains.

Its subcellular location is the cell inner membrane. F(1)F(0) ATP synthase produces ATP from ADP in the presence of a proton or sodium gradient. F-type ATPases consist of two structural domains, F(1) containing the extramembraneous catalytic core and F(0) containing the membrane proton channel, linked together by a central stalk and a peripheral stalk. During catalysis, ATP synthesis in the catalytic domain of F(1) is coupled via a rotary mechanism of the central stalk subunits to proton translocation. Functionally, component of the F(0) channel, it forms part of the peripheral stalk, linking F(1) to F(0). In Chlorobium chlorochromatii (strain CaD3), this protein is ATP synthase subunit b.